The primary structure comprises 425 residues: MKYLNCFISTGLAAFFLVNSTSVLAADCSSDLTSGISTKRIYYVAPNGSSSNNGNSFNSPMSFTAAMAAANPGELILLKPGTYTIPYTQGKGNTITFNKSGKEGSPIYVAAANCGRAVFDFSFPDSQWVQASYGFYVTGDYWYFKGIEVTRAGYQGAYVTGSHNTFENTAFHHNRNTGLEINNGGSYNTVINSDAYRNYDPKKNGSMADGFGPKQKQGQGNRFGGCRAWENSDDGFDLFDSPQKVVIENSWAFRNGINYWSDSSFAGNGNGFKLGGNQAVGNHRITRSVAFGNVSKGFDQNNNAGGVTVINNTSYKNGINYGFGSNVKSGQKHYFRNNVSLSGSATVNNADAKSNSWDTGPVASASDFVSLDTSLATISRDNDGTLPETALFRLSTNSKLINAGTKESNISYSGSAPDLGAFERN.

The N-terminal stretch at 1 to 25 (MKYLNCFISTGLAAFFLVNSTSVLA) is a signal peptide. A disulfide bridge links Cys28 with Cys114. Positions 209, 233, 234, and 237 each coordinate Ca(2+). The active-site Proton acceptor is Lys273. Ca(2+) is bound by residues Asn402, Ser413, Ala416, Asp418, and Glu423.

This sequence belongs to the polysaccharide lyase 9 family. Ca(2+) is required as a cofactor.

It localises to the secreted. It catalyses the reaction Eliminative cleavage of (1-&gt;4)-alpha-D-galacturonan to give oligosaccharides with 4-deoxy-alpha-D-galact-4-enuronosyl groups at their non-reducing ends.. It participates in glycan metabolism; pectin degradation; 2-dehydro-3-deoxy-D-gluconate from pectin: step 2/5. Functionally, presents an endo-cleaving activity on polygalacturonate or partially methylated pectin. The sequence is that of Pectate lyase L (pelL) from Dickeya chrysanthemi (Pectobacterium chrysanthemi).